The chain runs to 396 residues: 1-deoxy-D-xylulose 5-phosphate reductoisomerase (396 aa).

Residues threonine 10, glycine 11, serine 12, isoleucine 13, and asparagine 123 each contribute to the NADPH site. Lysine 124 contributes to the 1-deoxy-D-xylulose 5-phosphate binding site. Glutamate 125 is a binding site for NADPH. Position 149 (aspartate 149) interacts with Mn(2+). The 1-deoxy-D-xylulose 5-phosphate site is built by serine 150, glutamate 151, serine 185, and histidine 208. Glutamate 151 is a binding site for Mn(2+). Glycine 214 is a binding site for NADPH. 4 residues coordinate 1-deoxy-D-xylulose 5-phosphate: serine 221, asparagine 226, lysine 227, and glutamate 230. Glutamate 230 serves as a coordination point for Mn(2+).

It belongs to the DXR family. Mg(2+) serves as cofactor. Mn(2+) is required as a cofactor.

It carries out the reaction 2-C-methyl-D-erythritol 4-phosphate + NADP(+) = 1-deoxy-D-xylulose 5-phosphate + NADPH + H(+). It participates in isoprenoid biosynthesis; isopentenyl diphosphate biosynthesis via DXP pathway; isopentenyl diphosphate from 1-deoxy-D-xylulose 5-phosphate: step 1/6. Functionally, catalyzes the NADPH-dependent rearrangement and reduction of 1-deoxy-D-xylulose-5-phosphate (DXP) to 2-C-methyl-D-erythritol 4-phosphate (MEP). The polypeptide is 1-deoxy-D-xylulose 5-phosphate reductoisomerase (Shewanella sp. (strain MR-7)).